A 192-amino-acid chain; its full sequence is Ribosomal RNA small subunit methyltransferase G (192 aa).

S-adenosyl-L-methionine-binding positions include Gly-63, Leu-68, 112-113 (IE), and Arg-125.

Belongs to the methyltransferase superfamily. RNA methyltransferase RsmG family.

Its subcellular location is the cytoplasm. It catalyses the reaction guanosine(527) in 16S rRNA + S-adenosyl-L-methionine = N(7)-methylguanosine(527) in 16S rRNA + S-adenosyl-L-homocysteine. Specifically methylates the N7 position of guanine in position 527 of 16S rRNA. The protein is Ribosomal RNA small subunit methyltransferase G of Rickettsia rickettsii (strain Iowa).